A 204-amino-acid polypeptide reads, in one-letter code: 34 kDa membrane antigen (204 aa).

The N-terminal stretch at 1 to 19 (MKRVSLLGSAAIFALVFSA) is a signal peptide. Residue Cys-20 is the site of N-palmitoyl cysteine attachment. Residue Cys-20 is the site of S-diacylglycerol cysteine attachment.

Belongs to the UPF0423 family.

The protein resides in the cell membrane. In terms of biological role, this antigen is a pathogen-specific membrane immunogen. This Treponema pallidum (strain Nichols) protein is 34 kDa membrane antigen (tpd).